Reading from the N-terminus, the 253-residue chain is Mediator of RNA polymerase II transcription subunit 10 (253 aa).

3 disordered regions span residues 32-63 (YDTNPSSSNNNTPTSSRASGGGGGGGGGHASS), 88-109 (LPSSPSSGPSNNQPQQGTTELE), and 206-253 (VEAT…QSGQ). The span at 34 to 47 (TNPSSSNNNTPTSS) shows a compositional bias: low complexity. The span at 50-60 (SGGGGGGGGGH) shows a compositional bias: gly residues. Residues 88–104 (LPSSPSSGPSNNQPQQG) show a composition bias toward low complexity. The segment covering 231 to 253 (SAGGEGQQGQGQGQQGQGQQSGQ) has biased composition (gly residues).

It belongs to the Mediator complex subunit 10 family. In terms of assembly, component of the Mediator complex.

The protein localises to the nucleus. Its function is as follows. Component of the Mediator complex, a coactivator involved in the regulated transcription of nearly all RNA polymerase II-dependent genes. Mediator functions as a bridge to convey information from gene-specific regulatory proteins to the basal RNA polymerase II transcription machinery. Mediator is recruited to promoters by direct interactions with regulatory proteins and serves as a scaffold for the assembly of a functional preinitiation complex with RNA polymerase II and the general transcription factors. This chain is Mediator of RNA polymerase II transcription subunit 10 (nut2), found in Neurospora crassa (strain ATCC 24698 / 74-OR23-1A / CBS 708.71 / DSM 1257 / FGSC 987).